Reading from the N-terminus, the 185-residue chain is Intraflagellar transport protein 22 homolog (185 aa).

GTP is bound by residues 10 to 17 (GPCESGKT), 63 to 67 (DCGGD), and 123 to 126 (HKPG).

It belongs to the small GTPase superfamily. Rab family. As to quaternary structure, component of the IFT complex B, at least composed of IFT20, IFT22, IFT25, IFT27, IFT46, IFT52, TRAF3IP1/IFT54, IFT57, IFT74, IFT80, IFT81, and IFT88. Interacts with IFT88. Interacts with CFAP61.

Its subcellular location is the cell projection. The protein localises to the cilium. Small GTPase-like component of the intraflagellar transport (IFT) complex B. This chain is Intraflagellar transport protein 22 homolog (IFT22), found in Bos taurus (Bovine).